Consider the following 396-residue polypeptide: Elongation factor Tu 2 (396 aa).

The tr-type G domain occupies 10–206; that stretch reads KPHVNVGTIG…ALDTYIPTPE (197 aa). The segment at 19 to 26 is G1; that stretch reads GHVDHGKT. Residue 19 to 26 participates in GTP binding; it reads GHVDHGKT. Mg(2+) is bound at residue threonine 26. The segment at 60-64 is G2; it reads GITIN. Residues 81–84 are G3; sequence DCPG. Residues 81–85 and 136–139 contribute to the GTP site; these read DCPGH and NKAD. The G4 stretch occupies residues 136–139; the sequence is NKAD. The interval 174–176 is G5; it reads SAK.

Belongs to the TRAFAC class translation factor GTPase superfamily. Classic translation factor GTPase family. EF-Tu/EF-1A subfamily. As to quaternary structure, monomer.

Its subcellular location is the cytoplasm. It catalyses the reaction GTP + H2O = GDP + phosphate + H(+). GTP hydrolase that promotes the GTP-dependent binding of aminoacyl-tRNA to the A-site of ribosomes during protein biosynthesis. In Methylobacillus flagellatus (strain ATCC 51484 / DSM 6875 / VKM B-1610 / KT), this protein is Elongation factor Tu 2.